Here is a 187-residue protein sequence, read N- to C-terminus: uncharacterized protein (187 aa).

Positions 1–28 (MRLHRTNNSRRCTILLILALKIFDFVDT) are cleaved as a signal peptide. Residues Asn58, Asn70, Asn156, and Asn168 are each glycosylated (N-linked (GlcNAc...) asparagine).

It localises to the secreted. This is an uncharacterized protein from Caenorhabditis elegans.